A 38-amino-acid chain; its full sequence is Small toxic protein BsrG (38 aa).

The helical transmembrane segment at 11 to 31 threads the bilayer; it reads INFGGLILNTVLLIFNIMMIV.

Its subcellular location is the cell membrane. Its function is as follows. Toxic component of a type I toxin-antitoxin (TA) system; expression in the absence of cognate antisense antitoxin SR4 RNA leads to cell lysis. Induced expression causes membrane invaginations that dislocate the cell wall synthesis machinery, leading to eventual death. Unlike many type I TA systems it does not form pores. Base pairing occurs between the 3' UTRs of bsrG mRNA and SR4 RNA, which leads to initiation of degradation by RNase III (rnc) followed by the action of RNase Y (rny) and RNase R (rnr). Not toxic when expressed in E.coli. When induced during logarithmic growth it only slowly exerts its toxic effect. Expression during log growth leads to significant disturbances of cell envelope biosynthesis and cell morphology, causing cell membrane invaginations and delocalization of cell division and cell wall synthesis machinery. Cell lysis depends on mreB, lytC and lytD, suggesting expression of bsrG triggers autolysis rather than disintegration of the membrane. Additionally expression of bsrG also inhibits transcription. The polypeptide is Small toxic protein BsrG (Bacillus subtilis (strain 168)).